We begin with the raw amino-acid sequence, 143 residues long: Hemoglobin subunit alpha (143 aa).

At S2 the chain carries N-acetylserine. One can recognise a Globin domain in the interval 2 to 143 (SLSDTDKAVV…LALALSEKYR (142 aa)). Residue H60 coordinates O2. H89 serves as a coordination point for heme b.

It belongs to the globin family. In terms of assembly, heterotetramer of two alpha chains and two beta chains. As to expression, red blood cells.

In terms of biological role, involved in oxygen transport from gills to the various peripheral tissues. In Danio rerio (Zebrafish), this protein is Hemoglobin subunit alpha (hbaa1).